Consider the following 293-residue polypeptide: uncharacterized protein (293 aa).

This is an uncharacterized protein from Acanthamoeba polyphaga (Amoeba).